The following is a 508-amino-acid chain: TATA box-binding protein-like 1 (508 aa).

Disordered regions lie at residues 145-190 (QISY…QMHH), 236-262 (EPIPVKIEVPDVPPEGTSAANEEPMPD), and 456-479 (QKKRKRKAPVNRGPPIKRERFDDS).

This sequence belongs to the TBP family.

It is found in the nucleus. May be a general transcription factor. Plays an essential role for RNA polymerase II/ama-1 transcription in early embryos whereby it activates a subset of RNA polymerase II promoters and facilitates the reestablishment of transcription after mitosis. The polypeptide is TATA box-binding protein-like 1 (Caenorhabditis elegans).